Reading from the N-terminus, the 133-residue chain is Small ribosomal subunit protein uS8 (133 aa).

Belongs to the universal ribosomal protein uS8 family. Part of the 30S ribosomal subunit. Contacts proteins S5 and S12.

One of the primary rRNA binding proteins, it binds directly to 16S rRNA central domain where it helps coordinate assembly of the platform of the 30S subunit. In Chlorobaculum parvum (strain DSM 263 / NCIMB 8327) (Chlorobium vibrioforme subsp. thiosulfatophilum), this protein is Small ribosomal subunit protein uS8.